We begin with the raw amino-acid sequence, 361 residues long: Protein SSUH2 homolog (361 aa).

It is found in the cytoplasm. It localises to the nucleus. Plays a role in odontogenesis. This is Protein SSUH2 homolog from Danio rerio (Zebrafish).